The following is a 696-amino-acid chain: Elongation factor G (696 aa).

The tr-type G domain occupies 8 to 290; the sequence is ERYRNIGIMA…AVLDYLPSPL (283 aa). GTP is bound by residues 17–24, 88–92, and 142–145; these read AHIDAGKT, DTPGH, and NKMD.

It belongs to the TRAFAC class translation factor GTPase superfamily. Classic translation factor GTPase family. EF-G/EF-2 subfamily.

The protein resides in the cytoplasm. In terms of biological role, catalyzes the GTP-dependent ribosomal translocation step during translation elongation. During this step, the ribosome changes from the pre-translocational (PRE) to the post-translocational (POST) state as the newly formed A-site-bound peptidyl-tRNA and P-site-bound deacylated tRNA move to the P and E sites, respectively. Catalyzes the coordinated movement of the two tRNA molecules, the mRNA and conformational changes in the ribosome. The polypeptide is Elongation factor G (Nitrosomonas europaea (strain ATCC 19718 / CIP 103999 / KCTC 2705 / NBRC 14298)).